The chain runs to 284 residues: Bifunctional protein FolD (284 aa).

NADP(+) is bound by residues 165–167 (GRS), Ser-190, and Val-231.

Belongs to the tetrahydrofolate dehydrogenase/cyclohydrolase family. In terms of assembly, homodimer.

It catalyses the reaction (6R)-5,10-methylene-5,6,7,8-tetrahydrofolate + NADP(+) = (6R)-5,10-methenyltetrahydrofolate + NADPH. The enzyme catalyses (6R)-5,10-methenyltetrahydrofolate + H2O = (6R)-10-formyltetrahydrofolate + H(+). The protein operates within one-carbon metabolism; tetrahydrofolate interconversion. Catalyzes the oxidation of 5,10-methylenetetrahydrofolate to 5,10-methenyltetrahydrofolate and then the hydrolysis of 5,10-methenyltetrahydrofolate to 10-formyltetrahydrofolate. The sequence is that of Bifunctional protein FolD from Ruminiclostridium cellulolyticum (strain ATCC 35319 / DSM 5812 / JCM 6584 / H10) (Clostridium cellulolyticum).